The primary structure comprises 736 residues: Zinc finger CCCH domain-containing protein 14 (736 aa).

Methionine 1 carries the post-translational modification N-acetylmethionine. 2 stretches are compositionally biased toward polar residues: residues 78–103 (TEPS…SNFS) and 131–145 (VSTS…NVRQ). The tract at residues 78-146 (TEPSSLKSSD…ESKTTNVRQT (69 aa)) is disordered. The residue at position 85 (serine 85) is a Phosphoserine. Glycyl lysine isopeptide (Lys-Gly) (interchain with G-Cter in SUMO2) cross-links involve residues lysine 99, lysine 139, lysine 175, and lysine 198. Position 240 is a phosphoserine (serine 240). Lysine 245 participates in a covalent cross-link: Glycyl lysine isopeptide (Lys-Gly) (interchain with G-Cter in SUMO2). Serine 281 bears the Phosphoserine mark. Residues lysine 283 and lysine 295 each participate in a glycyl lysine isopeptide (Lys-Gly) (interchain with G-Cter in SUMO2) cross-link. Positions 310–350 (HDGEEEEEDDDYGSRTGSISSSVSVPAKPERRPSLPPSKQA) are disordered. Phosphoserine occurs at positions 327 and 343. Lysine 357 carries the N6-acetyllysine; alternate modification. Lysine 357 participates in a covalent cross-link: Glycyl lysine isopeptide (Lys-Gly) (interchain with G-Cter in SUMO2); alternate. Lysine 378 is covalently cross-linked (Glycyl lysine isopeptide (Lys-Gly) (interchain with G-Cter in SUMO2)). Phosphoserine is present on residues serine 390 and serine 409. Positions 398 to 430 (VVQGQSRTPRISPPIKEEETKGDSVEKNQGTQQ) are disordered. The span at 412–423 (IKEEETKGDSVE) shows a compositional bias: basic and acidic residues. Residue lysine 413 forms a Glycyl lysine isopeptide (Lys-Gly) (interchain with G-Cter in SUMO2) linkage. Serine 421 is modified (phosphoserine). Lysine 489 is covalently cross-linked (Glycyl lysine isopeptide (Lys-Gly) (interchain with G-Cter in SUMO2)). Serine 498, serine 515, serine 527, and serine 620 each carry phosphoserine. C3H1-type zinc fingers lie at residues 595–620 (EKLL…HPIS), 621–640 (PCKA…VHPN), 641–656 (CKYD…PFTH), 682–699 (CRYF…YHPK), and 701–719 (CRFN…HPTI).

The protein belongs to the ZC3H14 family. Homodimer; facilitating circular RNAs (circRNAs) formation. Associates with the spliceosome. Interacts with HOOK2. Interacts with ZFC3H1 in a RNase-sensitive manner.

Its subcellular location is the nucleus speckle. In terms of biological role, RNA-binding protein involved in the biogenesis of circular RNAs (circRNAs), which are produced by back-splicing circularization of pre-mRNAs. Acts by binding to both exon-intron boundary and 3'-UTR of pre-mRNAs to promote circRNA biogenesis through dimerization and the association with the spliceosome. Required for spermatogenesis via involvement in circRNA biogenesis. Regulates the pre-mRNA processing of ATP5MC1; preventing its degradation. Also binds the poly(A) tail of mRNAs; controlling poly(A) length in neuronal cells. In Macaca fascicularis (Crab-eating macaque), this protein is Zinc finger CCCH domain-containing protein 14 (ZC3H14).